The sequence spans 309 residues: 2-dehydropantoate 2-reductase (309 aa).

Residues 7–12, Arg-31, and Lys-74 each bind NADP(+); that span reads GAGSIG. Residues 8 to 10, Arg-31, Lys-74, and Cys-84 each bind CoA; that span reads AGS. NADP(+) is bound by residues Asn-100 and Ala-124. Catalysis depends on Lys-180, which acts as the Proton donor. Substrate is bound by residues Lys-180, Asn-184, Asn-188, Asn-198, and 247-250; that span reads NYNS. Residue Arg-257 coordinates CoA. Glu-262 contacts NADP(+).

It belongs to the ketopantoate reductase family. Homodimer.

It localises to the cytoplasm. The catalysed reaction is (R)-pantoate + NAD(+) = 2-dehydropantoate + NADH + H(+). The enzyme catalyses (R)-pantoate + NADP(+) = 2-dehydropantoate + NADPH + H(+). The protein operates within cofactor biosynthesis; coenzyme A biosynthesis. Its activity is regulated as follows. Regulated by feedback inhibition by coenzyme A (CoA). CoA acts by competing with NAD(P)H. A disulfide bond is formed between CoA and Cys-84, which indicates an irreversible inhibition upon binding of CoA. Its function is as follows. Catalyzes the NAD(P)H-dependent reduction of ketopantoate into pantoic acid. Prefers NADH rather than NADPH as the electron donor. The polypeptide is 2-dehydropantoate 2-reductase (Thermococcus kodakarensis (strain ATCC BAA-918 / JCM 12380 / KOD1) (Pyrococcus kodakaraensis (strain KOD1))).